Consider the following 161-residue polypeptide: Small ribosomal subunit protein bS16 (161 aa).

Residues E114–S161 are disordered. Over residues P124–A133 the composition is skewed to basic residues.

Belongs to the bacterial ribosomal protein bS16 family.

In Mycobacterium marinum (strain ATCC BAA-535 / M), this protein is Small ribosomal subunit protein bS16.